A 449-amino-acid chain; its full sequence is tRNA (guanine(37)-N(1))-methyltransferase (449 aa).

S-adenosyl-L-methionine contacts are provided by residues H216, 254 to 255, 282 to 283, and N345; these read DL and DG.

Belongs to the class I-like SAM-binding methyltransferase superfamily. TRM5/TYW2 family. Monomer.

Its subcellular location is the mitochondrion matrix. The protein resides in the nucleus. The protein localises to the cytoplasm. It catalyses the reaction guanosine(37) in tRNA + S-adenosyl-L-methionine = N(1)-methylguanosine(37) in tRNA + S-adenosyl-L-homocysteine + H(+). In terms of biological role, specifically methylates the N1 position of guanosine-37 in various cytoplasmic and mitochondrial tRNAs. Methylation is not dependent on the nature of the nucleoside 5' of the target nucleoside. This is the first step in the biosynthesis of wybutosine (yW), a modified base adjacent to the anticodon of tRNAs and required for accurate decoding. This is tRNA (guanine(37)-N(1))-methyltransferase from Candida albicans (strain SC5314 / ATCC MYA-2876) (Yeast).